The sequence spans 465 residues: UDP-N-acetylmuramate--L-alanine ligase (465 aa).

An ATP-binding site is contributed by 112–118 (GTHGKTT).

Belongs to the MurCDEF family.

The protein resides in the cytoplasm. The enzyme catalyses UDP-N-acetyl-alpha-D-muramate + L-alanine + ATP = UDP-N-acetyl-alpha-D-muramoyl-L-alanine + ADP + phosphate + H(+). It participates in cell wall biogenesis; peptidoglycan biosynthesis. Its function is as follows. Cell wall formation. In Burkholderia pseudomallei (strain 1106a), this protein is UDP-N-acetylmuramate--L-alanine ligase.